We begin with the raw amino-acid sequence, 112 residues long: Serum amyloid A protein (112 aa).

Glutamine 1 carries the pyrrolidone carboxylic acid modification. Residues 75–86 (MTRDQVREDTKA) show a composition bias toward basic and acidic residues. The tract at residues 75–112 (MTRDQVREDTKADQFANEWGRSGKDPNHFRPPGLPDKY) is disordered.

This sequence belongs to the SAA family. Expressed by the liver; secreted in plasma.

The protein localises to the secreted. Functionally, major acute phase reactant. Apolipoprotein of the HDL complex. The sequence is that of Serum amyloid A protein (SAA1) from Ovis aries (Sheep).